The primary structure comprises 523 residues: 2-isopropylmalate synthase (523 aa).

Positions 5 to 267 (VIIFDTTLRD…ETGINAKEIH (263 aa)) constitute a Pyruvate carboxyltransferase domain. The Mn(2+) site is built by Asp-14, His-202, His-204, and Asn-238. The tract at residues 392 to 523 (KLAQLVVHSD…QKDRSELGGV (132 aa)) is regulatory domain.

Belongs to the alpha-IPM synthase/homocitrate synthase family. LeuA type 1 subfamily. In terms of assembly, homodimer. It depends on Mn(2+) as a cofactor.

The protein resides in the cytoplasm. The catalysed reaction is 3-methyl-2-oxobutanoate + acetyl-CoA + H2O = (2S)-2-isopropylmalate + CoA + H(+). It participates in amino-acid biosynthesis; L-leucine biosynthesis; L-leucine from 3-methyl-2-oxobutanoate: step 1/4. Its function is as follows. Catalyzes the condensation of the acetyl group of acetyl-CoA with 3-methyl-2-oxobutanoate (2-ketoisovalerate) to form 3-carboxy-3-hydroxy-4-methylpentanoate (2-isopropylmalate). The polypeptide is 2-isopropylmalate synthase (Shewanella sediminis (strain HAW-EB3)).